The sequence spans 120 residues: Eukaryotic translation initiation factor 4E-binding protein 2 (120 aa).

T37 and T46 each carry phosphothreonine; by MTOR. The YXXXXLphi motif motif lies at 54–60 (YDRKFLL). S65 carries the post-translational modification Phosphoserine; by MTOR. T70 carries the phosphothreonine; by MTOR modification. S83 is modified (phosphoserine). Deamidated asparagine occurs at positions 99 and 102. The TOS motif signature appears at 116 to 120 (FEMDI).

The protein belongs to the eIF4E-binding protein family. Hypophosphorylated EIF4EBP2 interacts with EIF4E; phosphorylation of EIF4EBP2 by mTORC1 causes dissociation of the complex allowing EIF4G1/EIF4G3 to bind and consequent initiation of translation. Interacts (via TOS motif) with RPTOR; promoting phosphorylation by mTORC1. Interacts with PCMT1; required to prevent isoaspartate accumulation and convert isoaspartate to Asp. Post-translationally, phosphorylation at Thr-37, Thr-46, Ser-65, Thr-70 and Ser-83 is mediated by MTOR and corresponds to the hyperphosphorylated form: it abolishes binding to EIF4E by inducing folding of intrinsically disordered regions. First phosphorylated at Thr-37 and Thr-46 by MTOR, inducing folding of region encompassing residues from Pro-18 to Arg-62 of into a four-stranded beta-domain that sequesters the helical YXXXXLPhi motif into a partly buried beta-strand, blocking accessibility to EIF4E. Protein phosphorylated at Thr-37 and Thr-46 is however unstable and subsequent phosphorylation at Ser-65, Thr-70 and Ser-83 is required to stabilize the fold, decreasing affinity for EIF4E by a factor of 4000. Phosphorylated in response to insulin, EGF and PDGF. In terms of processing, deamidated at Asn-99 and Asn-102 to aspartate (Asp) in brain. Deamidation promotes interaction with RPTOR, subsequent phosphorylation by mTORC1 and increased translation, leading to impair kinetics of excitatory synaptic transmission. Deamidation takes place during postnatal development, when the PI3K-Akt-mTOR signaling is reduced, suggesting it acts as a compensatory mechanism to promote translation despite attenuated PI3K-Akt-mTOR signaling in neuron development. Deamidation converts Asn residues into a mixture of Asp and isoaspartate; interactions with PCMT1 is required to prevent isoaspartate accumulation and convert isoaspartate to Asp. As to expression, enriched in brain.

It is found in the cytoplasm. The protein localises to the nucleus. Functionally, repressor of translation initiation involved in synaptic plasticity, learning and memory formation. Regulates EIF4E activity by preventing its assembly into the eIF4F complex: hypophosphorylated form of EIF4EBP2 competes with EIF4G1/EIF4G3 and strongly binds to EIF4E, leading to repress translation. In contrast, hyperphosphorylated form dissociates from EIF4E, allowing interaction between EIF4G1/EIF4G3 and EIF4E, leading to initiation of translation. EIF4EBP2 is enriched in brain and acts as a regulator of synapse activity and neuronal stem cell renewal via its ability to repress translation initiation. Mediates the regulation of protein translation by hormones, growth factors and other stimuli that signal through the MAP kinase and mTORC1 pathways. The protein is Eukaryotic translation initiation factor 4E-binding protein 2 of Mus musculus (Mouse).